Reading from the N-terminus, the 183-residue chain is Protein vem-1 (183 aa).

A helical membrane pass occupies residues 9-29; it reads FTMYDAVFLVVVLGFFFYWLT. Residues 47 to 146 form the Cytochrome b5 heme-binding domain; the sequence is MSDMTVEELR…FKYLTVGRLV (100 aa).

The protein belongs to the cytochrome b5 family. MAPR subfamily. Interacts with unc-40 (via cytoplasmic domain). Expressed in the AVG pioneer midline neuron and in several nerve ring neurons that extend projecting axons into the right ventral nerve cord.

The protein resides in the membrane. It is found in the cell projection. Its subcellular location is the axon. Its function is as follows. Transmembrane protein required for the axon guidance of a subset of ventral nerve cord-associated interneurons and motor neurons. May function with the netrin receptor unc-40 in axon guidance. This Caenorhabditis elegans protein is Protein vem-1.